The following is a 290-amino-acid chain: MKTKTNQSVKTFGIVGFPLSHSLSPLIHNSIYKDRNINASYLVFETQNLNVEKIQEFRNSGILGLSVTIPHKETAFTLADKADDTSRIMKASNTLLIGPDSTYAYNTDGEGAYHSILEFSPESLKTGKVVILGSGGSARGIAFSLAVSGKIQNLLVCSRNEITAKEICLLVTKNSNVKAEPISQDVLLTRKEEISLVIHTTPLGMKGQSPGPYLPEDFFNSNMTLFDIVYNPLETPLVKTAQKAGAKIIPGSEMLLYQAMKQFELFTGISPNAEDIIKTRERLSKALENR.

Residues 22–24 (SLS) and threonine 68 contribute to the shikimate site. Lysine 72 serves as the catalytic Proton acceptor. Residue aspartate 84 coordinates NADP(+). The shikimate site is built by asparagine 93 and aspartate 108. Residues 133-137 (GSGGS) and isoleucine 228 contribute to the NADP(+) site. A shikimate-binding site is contributed by tyrosine 230. Glycine 251 contributes to the NADP(+) binding site.

Belongs to the shikimate dehydrogenase family. Homodimer.

It catalyses the reaction shikimate + NADP(+) = 3-dehydroshikimate + NADPH + H(+). It participates in metabolic intermediate biosynthesis; chorismate biosynthesis; chorismate from D-erythrose 4-phosphate and phosphoenolpyruvate: step 4/7. In terms of biological role, involved in the biosynthesis of the chorismate, which leads to the biosynthesis of aromatic amino acids. Catalyzes the reversible NADPH linked reduction of 3-dehydroshikimate (DHSA) to yield shikimate (SA). This is Shikimate dehydrogenase (NADP(+)) from Leptospira interrogans serogroup Icterohaemorrhagiae serovar Lai (strain 56601).